Consider the following 81-residue polypeptide: Cell division protein ZapB (81 aa).

The stretch at 5-81 forms a coiled coil; the sequence is LEVFEKLEAK…QALLGRMEEV (77 aa). At lysine 10 the chain carries N6-acetyllysine. The interval 36–67 is disordered; it reads NNSLSQEVQNAQHQREELERENNHLKEQQNGW. Residues 37–47 are compositionally biased toward polar residues; that stretch reads NSLSQEVQNAQ. The segment covering 48–62 has biased composition (basic and acidic residues); that stretch reads HQREELERENNHLKE.

Belongs to the ZapB family. In terms of assembly, homodimer. The ends of the coiled-coil dimer bind to each other, forming polymers. Interacts with FtsZ.

The protein resides in the cytoplasm. Non-essential, abundant cell division factor that is required for proper Z-ring formation. It is recruited early to the divisome by direct interaction with FtsZ, stimulating Z-ring assembly and thereby promoting cell division earlier in the cell cycle. Its recruitment to the Z-ring requires functional FtsA or ZipA. This chain is Cell division protein ZapB, found in Shigella boydii serotype 4 (strain Sb227).